Here is a 152-residue protein sequence, read N- to C-terminus: MIGIFHIFMWYFLLVLYMGQIKGAFGTYEPVTYKTGCTLWGIFFIIAGVFLIRVTKYPTRSGIISTLIINIICIITTITAVTLTIIELSHFNSVSYRNYGQAKLGREVSRILLFFYGLEFSIALTHSIYSCSNLFRRQNDLTSVTEEAESTP.

The next 4 membrane-spanning stretches (helical) occupy residues Met1–Ile21, Thr32–Ile52, Thr66–Ile86, and Ile111–Cys131.

This sequence belongs to the MS4A family.

It localises to the membrane. Functionally, may be involved in signal transduction as a component of a multimeric receptor complex. This chain is Membrane-spanning 4-domains subfamily A member 13 (MS4A13), found in Homo sapiens (Human).